The following is a 710-amino-acid chain: DNA ligase (710 aa).

Residues 1–26 (MPEDAIGQQVPPEQEAAGAEPTSAAR) form a disordered region. NAD(+) contacts are provided by residues 53-57 (DAEFD), 102-103 (SL), and E132. K134 acts as the N6-AMP-lysine intermediate in catalysis. The NAD(+) site is built by R155, E196, K312, and K336. Zn(2+) contacts are provided by C430, C433, C449, and C455. The BRCT domain occupies 619-708 (EGPRPLEGMT…PDAAREVARV (90 aa)).

Belongs to the NAD-dependent DNA ligase family. LigA subfamily. Mg(2+) is required as a cofactor. The cofactor is Mn(2+).

It catalyses the reaction NAD(+) + (deoxyribonucleotide)n-3'-hydroxyl + 5'-phospho-(deoxyribonucleotide)m = (deoxyribonucleotide)n+m + AMP + beta-nicotinamide D-nucleotide.. Its function is as follows. DNA ligase that catalyzes the formation of phosphodiester linkages between 5'-phosphoryl and 3'-hydroxyl groups in double-stranded DNA using NAD as a coenzyme and as the energy source for the reaction. It is essential for DNA replication and repair of damaged DNA. In Salinispora arenicola (strain CNS-205), this protein is DNA ligase.